The sequence spans 817 residues: Coiled-coil domain-containing protein 175 (817 aa).

Coiled-coil stretches lie at residues 130 to 166 (ILEISQVKGKIEKTNDEIKFLNDKIIELKNMNEALGI) and 217 to 594 (LQDA…KQEE). The tract at residues 761 to 817 (EEESPSSLSKEDLQKAGMKQKEEKTLRFSPSLHTRRDTLSRNCKMIKKRSRSPKNKP) is disordered. The span at 769–786 (SKEDLQKAGMKQKEEKTL) shows a compositional bias: basic and acidic residues. Basic residues predominate over residues 804–817 (KMIKKRSRSPKNKP).

In Rattus norvegicus (Rat), this protein is Coiled-coil domain-containing protein 175 (Ccdc175).